Reading from the N-terminus, the 434-residue chain is Nicotinate phosphoribosyltransferase (434 aa).

The residue at position 242 (H242) is a Phosphohistidine; by autocatalysis.

The protein belongs to the NAPRTase family. In terms of processing, transiently phosphorylated on a His residue during the reaction cycle. Phosphorylation strongly increases the affinity for substrates and increases the rate of nicotinate D-ribonucleotide production. Dephosphorylation regenerates the low-affinity form of the enzyme, leading to product release.

The catalysed reaction is nicotinate + 5-phospho-alpha-D-ribose 1-diphosphate + ATP + H2O = nicotinate beta-D-ribonucleotide + ADP + phosphate + diphosphate. Its pathway is cofactor biosynthesis; NAD(+) biosynthesis; nicotinate D-ribonucleotide from nicotinate: step 1/1. Functionally, catalyzes the synthesis of beta-nicotinate D-ribonucleotide from nicotinate and 5-phospho-D-ribose 1-phosphate at the expense of ATP. This is Nicotinate phosphoribosyltransferase from Mesorhizobium japonicum (strain LMG 29417 / CECT 9101 / MAFF 303099) (Mesorhizobium loti (strain MAFF 303099)).